Reading from the N-terminus, the 70-residue chain is Exodeoxyribonuclease 7 small subunit (70 aa).

Belongs to the XseB family. As to quaternary structure, heterooligomer composed of large and small subunits.

It is found in the cytoplasm. The enzyme catalyses Exonucleolytic cleavage in either 5'- to 3'- or 3'- to 5'-direction to yield nucleoside 5'-phosphates.. Bidirectionally degrades single-stranded DNA into large acid-insoluble oligonucleotides, which are then degraded further into small acid-soluble oligonucleotides. This Magnetococcus marinus (strain ATCC BAA-1437 / JCM 17883 / MC-1) protein is Exodeoxyribonuclease 7 small subunit.